We begin with the raw amino-acid sequence, 253 residues long: Ubiquinone/menaquinone biosynthesis C-methyltransferase UbiE (253 aa).

Residues Thr-76, Asp-97, 125–126, and Ser-142 each bind S-adenosyl-L-methionine; that span reads NA.

Belongs to the class I-like SAM-binding methyltransferase superfamily. MenG/UbiE family.

It carries out the reaction a 2-demethylmenaquinol + S-adenosyl-L-methionine = a menaquinol + S-adenosyl-L-homocysteine + H(+). The enzyme catalyses a 2-methoxy-6-(all-trans-polyprenyl)benzene-1,4-diol + S-adenosyl-L-methionine = a 5-methoxy-2-methyl-3-(all-trans-polyprenyl)benzene-1,4-diol + S-adenosyl-L-homocysteine + H(+). It participates in quinol/quinone metabolism; menaquinone biosynthesis; menaquinol from 1,4-dihydroxy-2-naphthoate: step 2/2. Its pathway is cofactor biosynthesis; ubiquinone biosynthesis. In terms of biological role, methyltransferase required for the conversion of demethylmenaquinol (DMKH2) to menaquinol (MKH2) and the conversion of 2-polyprenyl-6-methoxy-1,4-benzoquinol (DDMQH2) to 2-polyprenyl-3-methyl-6-methoxy-1,4-benzoquinol (DMQH2). This is Ubiquinone/menaquinone biosynthesis C-methyltransferase UbiE from Xylella fastidiosa (strain M12).